A 712-amino-acid chain; its full sequence is Polyribonucleotide nucleotidyltransferase (712 aa).

2 residues coordinate Mg(2+): Asp-493 and Asp-499. One can recognise a KH domain in the interval 560–619; sequence PRLLTFKVDPEDIGKIIGPGGKMVRSITEATGAKVDISDDGTITVSSSVGGQAEAARAMI. Residues 629–697 enclose the S1 motif domain; it reads GQVYLGKVTR…HKGRVNLTRL (69 aa).

This sequence belongs to the polyribonucleotide nucleotidyltransferase family. The cofactor is Mg(2+).

It localises to the cytoplasm. The enzyme catalyses RNA(n+1) + phosphate = RNA(n) + a ribonucleoside 5'-diphosphate. In terms of biological role, involved in mRNA degradation. Catalyzes the phosphorolysis of single-stranded polyribonucleotides processively in the 3'- to 5'-direction. The polypeptide is Polyribonucleotide nucleotidyltransferase (Synechococcus sp. (strain JA-3-3Ab) (Cyanobacteria bacterium Yellowstone A-Prime)).